Reading from the N-terminus, the 345-residue chain is uncharacterized protein (345 aa).

A compositionally biased stretch (polar residues) spans 1–13; that stretch reads MSKPNTETISVNI. The segment at 1–23 is disordered; sequence MSKPNTETISVNIPESEGVPLPD. Positions 283–316 form a coiled coil; the sequence is SLKQRTNILKKQGETLKKNVEDINKDTSNLKRHA.

It localises to the virion. This is an uncharacterized protein from Acanthamoeba polyphaga mimivirus (APMV).